The following is a 352-amino-acid chain: C-X-C chemokine receptor type 4 (352 aa).

The segment at 1-21 (MEGISIYTSDNYTEEMGSGDY) is important for chemokine binding and signaling. Over 1–38 (MEGISIYTSDNYTEEMGSGDYDSIKEPCFREENAHFNR) the chain is Extracellular. The residue at position 7 (Tyr-7) is a Sulfotyrosine. Residue Asn-11 is glycosylated (N-linked (GlcNAc...) asparagine). A Sulfotyrosine modification is found at Tyr-12. O-linked (Xyl...) (chondroitin sulfate) serine glycosylation is present at Ser-18. Sulfotyrosine is present on Tyr-21. 2 disulfide bridges follow: Cys-28–Cys-274 and Cys-109–Cys-186. Residues 39–63 (IFLPTIYSIIFLTGIVGNGLVILVM) form a helical membrane-spanning segment. At 64-77 (GYQKKLRSMTDKYR) the chain is on the cytoplasmic side. Residues 78–99 (LHLSVADLLFVITLPFWAVDAV) traverse the membrane as a helical segment. The segment at 94-97 (WAVD) is chemokine binding. The Extracellular segment spans residues 100–110 (ANWYFGNFLCK). A helical membrane pass occupies residues 111 to 130 (AVHVIYTVNLYSSVLILAFI). Residues 113–117 (HVIYT) form a chemokine binding region. Residues 131-154 (SLDRYLAIVHATNSQKPRKLLAEK) are Cytoplasmic-facing. An Important for signaling motif is present at residues 133–135 (DRY). Positions 135 to 147 (YLAIVHATNSQKP) are involved in dimerization; when bound to chemokine. Residues 155–174 (VVYVGVWIPALLLTIPDFIF) traverse the membrane as a helical segment. The Extracellular segment spans residues 175–195 (ASVSEADDRYICDRFYPNDLW). Residues 186-190 (CDRFY) are chemokine binding, important for signaling. The involved in dimerization stretch occupies residues 191–210 (PNDLWVVVFQFQHIMVGLIL). A helical transmembrane segment spans residues 196–216 (VVVFQFQHIMVGLILPGIVIL). Topologically, residues 217 to 241 (SCYCIIISKLSHSKGHQKRKALKTT) are cytoplasmic. The chain crosses the membrane as a helical span at residues 242–261 (VILILAFFACWLPYYIGISI). Over 262-282 (DSFILLEIIKQGCEFENTVHK) the chain is Extracellular. Positions 266-268 (LLE) are involved in dimerization. Residues 283–302 (WISITEALAFFHCCLNPILY) traverse the membrane as a helical segment. Topologically, residues 303-352 (AFLGAKFKTSAQHALTSVSRGSSLKILSKGKRGGHSSVSTESESSSFHSS) are cytoplasmic. Phosphoserine occurs at positions 319 and 321. Residues Ser-324 and Ser-325 each carry the phosphoserine; by PKC and GRK6 modification. The segment at 329 to 352 (LSKGKRGGHSSVSTESESSSFHSS) is disordered. Ser-330 bears the Phosphoserine; by GRK6 mark. Lys-331 participates in a covalent cross-link: Glycyl lysine isopeptide (Lys-Gly) (interchain with G-Cter in ubiquitin). Positions 337 to 352 (HSSVSTESESSSFHSS) are enriched in low complexity. Ser-339 bears the Phosphoserine; by GRK6 mark. Phosphoserine is present on residues Ser-348 and Ser-351.

The protein belongs to the G-protein coupled receptor 1 family. In terms of assembly, monomer. Can form homodimers. Interacts with CD164. Interacts with ARRB2; the interaction is dependent on the C-terminal phosphorylation of CXCR4 and allows activation of MAPK1 and MAPK3. Interacts with ARR3; the interaction is dependent on the C-terminal phosphorylation of CXCR4 and modulates calcium mobilization. Interacts with RNF113A; the interaction, enhanced by CXCL12, promotes CXCR4 ubiquitination and subsequent degradation. Interacts (via the cytoplasmic C-terminal) with ITCH (via the WW domains I and II); the interaction, enhanced by CXCL12, promotes CXCR4 ubiquitination and leads to its degradation. Interacts with extracellular ubiquitin. Interacts with DBN1; this interaction is enhanced by antigenic stimulation. Following LPS binding, may form a complex with GDF5, HSP90AA1 and HSPA8. In terms of processing, phosphorylated on agonist stimulation. Rapidly phosphorylated on serine and threonine residues in the C-terminal. Phosphorylation at Ser-324 and Ser-325 leads to recruitment of ITCH, ubiquitination and protein degradation. Post-translationally, ubiquitinated after ligand binding, leading to its degradation. Ubiquitinated by ITCH at the cell membrane on agonist stimulation. The ubiquitin-dependent mechanism, endosomal sorting complex required for transport (ESCRT), then targets CXCR4 for lysosomal degradation. This process is dependent also on prior Ser-/Thr-phosphorylation in the C-terminal of CXCR4. Also binding of ARRB1 to STAM negatively regulates CXCR4 sorting to lysosomes though modulating ubiquitination of SFR5S. Sulfation is required for efficient binding of CXCL12/SDF-1alpha and promotes its dimerization. In terms of processing, O- and N-glycosylated. N-glycosylation can mask coreceptor function. The O-glycosylation chondroitin sulfate attachment does not affect interaction with CXCL12/SDF-1alpha nor its coreceptor activity.

It is found in the cell membrane. Its subcellular location is the cell junction. It localises to the early endosome. The protein resides in the late endosome. The protein localises to the lysosome. In terms of biological role, receptor for the C-X-C chemokine CXCL12/SDF-1 that transduces a signal by increasing intracellular calcium ion levels and enhancing MAPK1/MAPK3 activation. Involved in the AKT signaling cascade. Plays a role in regulation of cell migration, e.g. during wound healing. Acts as a receptor for extracellular ubiquitin; leading to enhanced intracellular calcium ions and reduced cellular cAMP levels. Binds bacterial lipopolysaccharide (LPS) et mediates LPS-induced inflammatory response, including TNF secretion by monocytes. Involved in hematopoiesis and in cardiac ventricular septum formation. Also plays an essential role in vascularization of the gastrointestinal tract, probably by regulating vascular branching and/or remodeling processes in endothelial cells. Involved in cerebellar development. In the CNS, could mediate hippocampal-neuron survival. The protein is C-X-C chemokine receptor type 4 (CXCR4) of Macaca fascicularis (Crab-eating macaque).